Reading from the N-terminus, the 119-residue chain is Protein MGF 110-11L (119 aa).

The first 17 residues, 1–17, serve as a signal peptide directing secretion; the sequence is MKVLLGLLLGYSVLILA.

This sequence belongs to the asfivirus MGF 110 family.

The chain is Protein MGF 110-11L from Ornithodoros (relapsing fever ticks).